A 262-amino-acid polypeptide reads, in one-letter code: Phosphonates import ATP-binding protein PhnC (262 aa).

An ABC transporter domain is found at 5 to 253 (IRVEKLAKTF…RFDHLYRSIN (249 aa)). An ATP-binding site is contributed by 37 to 44 (GPSGSGKS).

Belongs to the ABC transporter superfamily. Phosphonates importer (TC 3.A.1.9.1) family. In terms of assembly, the complex is composed of two ATP-binding proteins (PhnC), two transmembrane proteins (PhnE) and a solute-binding protein (PhnD).

It is found in the cell inner membrane. The enzyme catalyses phosphonate(out) + ATP + H2O = phosphonate(in) + ADP + phosphate + H(+). Functionally, part of the ABC transporter complex PhnCDE involved in phosphonates import. Responsible for energy coupling to the transport system. The protein is Phosphonates import ATP-binding protein PhnC of Shigella boydii serotype 4 (strain Sb227).